Consider the following 1219-residue polypeptide: A disintegrin and metalloproteinase with thrombospondin motifs 18 (1219 aa).

A signal peptide spans 1 to 47; sequence MECALLCLCALRAAGPGPPWGPAGLGRLAKALQLCCFCCASVAVALA. Residues 48–284 constitute a propeptide that is removed on maturation; sequence SDSGSSGGSG…EYGGTGRPRR (237 aa). 2 N-linked (GlcNAc...) asparagine glycosylation sites follow: Asn151 and Asn190. Residues 217 to 248 form a disordered region; sequence YPGSQRTYPGHSPSHTPPASQSQEPEYSHRRW. Polar residues predominate over residues 218–241; sequence PGSQRTYPGHSPSHTPPASQSQEP. A Peptidase M12B domain is found at 293–498; the sequence is LNVETLVVAD…PQAGCLVDEP (206 aa). Cystine bridges form between Cys369-Cys420, Cys395-Cys402, Cys414-Cys493, Cys453-Cys477, Cys521-Cys546, Cys532-Cys553, Cys541-Cys572, Cys566-Cys577, Cys601-Cys638, Cys605-Cys643, and Cys616-Cys628. His436 provides a ligand contact to Zn(2+). Glu437 is a catalytic residue. Positions 440 and 446 each coordinate Zn(2+). The TSP type-1 1 domain maps to 589–644; the sequence is HGQWSAWSKWSECSRTCGGGVKFQERHCSNPKPQYGGKYCPGSSRIYKLCNINPCP. N-linked (GlcNAc...) asparagine glycans are attached at residues Asn745, Asn838, Asn865, and Asn909. 4 TSP type-1 domains span residues 931 to 990, 991 to 1049, 1052 to 1116, and 1121 to 1176; these read CPAY…NSHA, CPPE…GRCP, NRLQ…RTCP, and AVAS…NFCP. The PLAC domain occupies 1182–1219; the sequence is DDPSCVDFFSWCHLVPQHGVCNHKFYGKQCCRSCTRKS.

It depends on Zn(2+) as a cofactor. In terms of processing, the precursor is cleaved by a furin endopeptidase. Post-translationally, glycosylated. Can be O-fucosylated by POFUT2 on a serine or a threonine residue found within the consensus sequence C1-X(2)-(S/T)-C2-G of the TSP type-1 repeat domains where C1 and C2 are the first and second cysteine residue of the repeat, respectively. Fucosylated repeats can then be further glycosylated by the addition of a beta-1,3-glucose residue by the glucosyltransferase, B3GALTL. Fucosylation mediates the efficient secretion of ADAMTS family members. Can also be C-glycosylated with one or two mannose molecules on tryptophan residues within the consensus sequence W-X-X-W of the TPRs, and N-glycosylated. These other glycosylations can also facilitate secretion.

It is found in the secreted. It localises to the extracellular space. Its subcellular location is the extracellular matrix. The polypeptide is A disintegrin and metalloproteinase with thrombospondin motifs 18 (Adamts18) (Mus musculus (Mouse)).